Reading from the N-terminus, the 603-residue chain is Carbon catabolite repressor protein 4 homolog 2 (603 aa).

Residues 115-136 (ENNANEDDDLNRNNSAGSGSLA) are disordered. Residues 126–136 (RNNSAGSGSLA) are compositionally biased toward low complexity. Glutamate 302 contacts Mg(2+).

This sequence belongs to the CCR4/nocturin family. In terms of assembly, component of the CCR4-NOT complex, at least composed of CRR4 and CAF1 proteins. Mg(2+) is required as a cofactor.

The protein resides in the nucleus. The protein localises to the cytoplasm. The enzyme catalyses Exonucleolytic cleavage of poly(A) to 5'-AMP.. Its function is as follows. Acts as a catalytic component of the CCR4-NOT core complex, which in the nucleus seems to be a general transcription factor, and in the cytoplasm the major mRNA deadenylase involved in mRNA turnover. The chain is Carbon catabolite repressor protein 4 homolog 2 (CCR4-2) from Arabidopsis thaliana (Mouse-ear cress).